A 304-amino-acid polypeptide reads, in one-letter code: Dihydroorotate dehydrogenase B (NAD(+)), catalytic subunit (304 aa).

FMN contacts are provided by residues Ser22 and 46–47 (KG). Substrate contacts are provided by residues Lys46 and 70–74 (NAIGL). Positions 100 and 128 each coordinate FMN. Asn128 lines the substrate pocket. The Nucleophile role is filled by Cys131. 2 residues coordinate FMN: Lys166 and Ile192. 193–194 (NT) is a binding site for substrate. FMN contacts are provided by residues Gly218, 244–245 (GG), and 266–267 (GT).

It belongs to the dihydroorotate dehydrogenase family. Type 1 subfamily. Heterotetramer of 2 PyrK and 2 PyrD type B subunits. FMN is required as a cofactor.

Its subcellular location is the cytoplasm. The catalysed reaction is (S)-dihydroorotate + NAD(+) = orotate + NADH + H(+). It functions in the pathway pyrimidine metabolism; UMP biosynthesis via de novo pathway; orotate from (S)-dihydroorotate (NAD(+) route): step 1/1. Its function is as follows. Catalyzes the conversion of dihydroorotate to orotate with NAD(+) as electron acceptor. The polypeptide is Dihydroorotate dehydrogenase B (NAD(+)), catalytic subunit (pyrD) (Pelobacter propionicus (strain DSM 2379 / NBRC 103807 / OttBd1)).